The sequence spans 318 residues: Malate dehydrogenase (318 aa).

NAD(+) contacts are provided by residues 10–15 (GGGQIG) and D34. The substrate site is built by R83 and R89. NAD(+) is bound by residues N96 and 119-121 (LSN). Positions 121 and 152 each coordinate substrate. Catalysis depends on H176, which acts as the Proton acceptor.

The protein belongs to the LDH/MDH superfamily. MDH type 3 family.

The enzyme catalyses (S)-malate + NAD(+) = oxaloacetate + NADH + H(+). Catalyzes the reversible oxidation of malate to oxaloacetate. This chain is Malate dehydrogenase, found in Syntrophotalea carbinolica (strain DSM 2380 / NBRC 103641 / GraBd1) (Pelobacter carbinolicus).